Reading from the N-terminus, the 805-residue chain is Transitional endoplasmic reticulum ATPase (805 aa).

A Phosphoserine modification is found at S3. ATP-binding positions include 247-253 (PGTGKTL), N348, H384, and 521-526 (GCGKTL). The disordered stretch occupies residues 768-805 (FGSFRFPAGGQGGAGPSQGAGGGSGGSHFNEEEDDLYG). Over residues 776–793 (GGQGGAGPSQGAGGGSGG) the composition is skewed to gly residues.

This sequence belongs to the AAA ATPase family. As to quaternary structure, homohexamer. Forms a ring-shaped particle of 12.5 nm diameter, that displays 6-fold radial symmetry. Interacts with the FACT/DUF complex, which includes subunits ssrp1/duf87 and supt16h/duf140. In terms of processing, phosphorylated.

The protein resides in the cytoplasm. It is found in the cytosol. The protein localises to the endoplasmic reticulum. It localises to the nucleus. Its subcellular location is the stress granule. The enzyme catalyses ATP + H2O = ADP + phosphate + H(+). Its activity is regulated as follows. ATPase activity is inhibited or reduced by lowering pH from 9.0 to 7.0, and by addition of Ca(2+), EDTA, KNO(3) or by treatment with N-ethylmaleimide (NEM). In terms of biological role, necessary for the fragmentation of Golgi stacks during mitosis and for their reassembly after mitosis. Involved in the formation of the nuclear envelope, and of the transitional endoplasmic reticulum (tER). The transfer of membranes from the endoplasmic reticulum to the Golgi apparatus occurs via 50-70 nm transition vesicles which derive from part-rough, part-smooth transitional elements of the endoplasmic reticulum (tER). Vesicle budding from the tER is an ATP-dependent process. Involved in endoplasmic reticulum stress-induced pre-emptive quality control, a mechanism that selectively attenuates the translocation of newly synthesized proteins into the endoplasmic reticulum and reroutes them to the cytosol for proteasomal degradation. Involved in clearance process by mediating G3BP1 extraction from stress granules. Also involved in DNA damage response: recruited to double-strand breaks (DSBs) sites and promotes the recruitment of tp53bp1 at DNA damage sites. Together with sprtn metalloprotease, involved in the repair of covalent DNA-protein cross-links (DPCs) during DNA synthesis. Involved in interstrand cross-link repair in response to replication stress by mediating unloading of the ubiquitinated CMG helicase complex. Enhances cell cycle progression and inhibits apoptosis at low temperatures. Essential for the maturation of ubiquitin-containing autophagosomes and the clearance of ubiquitinated protein by autophagy. Acts as a negative regulator of type I interferon production by promoting ubiquitination of rigi. May play a role in the ubiquitin-dependent sorting of membrane proteins to lysosomes where they undergo degradation. May more particularly play a role in caveolins sorting in cells. By controlling the steady-state expression of the IGF1R receptor, indirectly regulates the insulin-like growth factor receptor signaling pathway. The protein is Transitional endoplasmic reticulum ATPase of Xenopus tropicalis (Western clawed frog).